The following is a 527-amino-acid chain: Protein TIC 56, chloroplastic (527 aa).

A chloroplast-targeting transit peptide spans 1–48 (MSSMNFNPFQNWFEKPPNPVPSINFVSLADSFFPKSQSPNFASIGLPK). Positions 43–67 (SIGLPKFSKKSPKPETAGTDEPGPY) are disordered. At Asn-350 the chain carries Deamidated asparagine. Positions 491–508 (RREEELREEDLKHYSGRT) are enriched in basic and acidic residues. The interval 491 to 527 (RREEELREEDLKHYSGRTDEDEEEEEEEDDDSNSKKD) is disordered. Over residues 509–521 (DEDEEEEEEEDDD) the composition is skewed to acidic residues.

In terms of assembly, part of the Tic complex. Component of the 1-MD complex, composed of TIC20-I, TIC214, TIC100 and TIC56. Interacts with the translocating preproteins. Hydrolysis of ATP is essential for the formation of this complex. The 1-MD complex interacts with TIC21.

The protein localises to the plastid. The protein resides in the chloroplast inner membrane. Its function is as follows. Involved in protein precursor import into chloroplasts. May be part of an intermediate translocation complex acting as a protein-conducting channel at the inner envelope. The polypeptide is Protein TIC 56, chloroplastic (Arabidopsis thaliana (Mouse-ear cress)).